Consider the following 389-residue polypeptide: Migration and invasion-inhibitory protein (389 aa).

Over residues 44–54 (LDYSSSSNNLE) the composition is skewed to low complexity. Disordered regions lie at residues 44–80 (LDYS…WDPL) and 131–150 (KRPV…AQVP). Polar residues predominate over residues 58–70 (SQETSASSVAPNS). Residues 71–80 (QDKRHVWDPL) are compositionally biased toward basic and acidic residues. Phosphoserine is present on Ser-309.

As to quaternary structure, interacts with IGFBP2.

Functionally, inhibits glioma cells invasion and down-regulates adhesion- and motility-associated genes such as NFKB2 and ICAM1. Exhibits opposing effects to IGFBP2 on cell invasion. The chain is Migration and invasion-inhibitory protein (Miip) from Rattus norvegicus (Rat).